Reading from the N-terminus, the 609-residue chain is Elongation factor 4 (609 aa).

Residues 11–193 enclose the tr-type G domain; the sequence is SRIRNFSIIA…QIVEKVPAPS (183 aa). GTP-binding positions include 23–28 and 140–143; these read DHGKST and NKID.

The protein belongs to the TRAFAC class translation factor GTPase superfamily. Classic translation factor GTPase family. LepA subfamily.

It localises to the cell membrane. The enzyme catalyses GTP + H2O = GDP + phosphate + H(+). Its function is as follows. Required for accurate and efficient protein synthesis under certain stress conditions. May act as a fidelity factor of the translation reaction, by catalyzing a one-codon backward translocation of tRNAs on improperly translocated ribosomes. Back-translocation proceeds from a post-translocation (POST) complex to a pre-translocation (PRE) complex, thus giving elongation factor G a second chance to translocate the tRNAs correctly. Binds to ribosomes in a GTP-dependent manner. The chain is Elongation factor 4 from Halalkalibacterium halodurans (strain ATCC BAA-125 / DSM 18197 / FERM 7344 / JCM 9153 / C-125) (Bacillus halodurans).